A 271-amino-acid chain; its full sequence is Putative pyruvate, phosphate dikinase regulatory protein (271 aa).

150-157 (GVSRTSKT) serves as a coordination point for ADP.

The protein belongs to the pyruvate, phosphate/water dikinase regulatory protein family. PDRP subfamily.

It carries out the reaction N(tele)-phospho-L-histidyl/L-threonyl-[pyruvate, phosphate dikinase] + ADP = N(tele)-phospho-L-histidyl/O-phospho-L-threonyl-[pyruvate, phosphate dikinase] + AMP + H(+). The enzyme catalyses N(tele)-phospho-L-histidyl/O-phospho-L-threonyl-[pyruvate, phosphate dikinase] + phosphate + H(+) = N(tele)-phospho-L-histidyl/L-threonyl-[pyruvate, phosphate dikinase] + diphosphate. Bifunctional serine/threonine kinase and phosphorylase involved in the regulation of the pyruvate, phosphate dikinase (PPDK) by catalyzing its phosphorylation/dephosphorylation. This is Putative pyruvate, phosphate dikinase regulatory protein from Oceanobacillus iheyensis (strain DSM 14371 / CIP 107618 / JCM 11309 / KCTC 3954 / HTE831).